We begin with the raw amino-acid sequence, 261 residues long: Zaragozic acid A biosynthesis cluster protein 8 (261 aa).

The segment covering 242 to 254 (GTRSHTPAATQRR) has biased composition (polar residues). The interval 242-261 (GTRSHTPAATQRRGQGRGCG) is disordered.

It participates in secondary metabolite biosynthesis. Part of the gene cluster that mediates the biosynthesis of squalestatin S1 (SQS1, also known as zaragozic acid A), a heavily oxidized fungal polyketide that offers potent cholesterol lowering activity by targeting squalene synthase (SS). SQS1 is composed of a 2,8-dioxobicyclic[3.2.1]octane-3,4,5-tricarboxyclic acid core that is connected to two lipophilic polyketide arms. These initial steps feature the priming of an unusual benzoic acid starter unit onto the highly reducing polyketide synthase clz14, followed by oxaloacetate extension and product release to generate a tricarboxylic acid containing product. The phenylalanine ammonia lyase (PAL) clz10 and the acyl-CoA ligase clz12 are involved in transforming phenylalanine into benzoyl-CoA. The citrate synthase-like protein clz17 is involved in connecting the C-alpha-carbons of the hexaketide chain and oxaloacetate to afford the tricarboxylic acid unit. The potential hydrolytic enzymes, clz11 and clz13, are in close proximity to pks2 and may participate in product release. On the other side, the tetraketide arm is synthesized by a the squalestatin tetraketide synthase clz2 and enzymatically esterified to the core in the last biosynthetic step, by the acetyltransferase clz6. The biosynthesis of the tetraketide must involve 3 rounds of chain extension. After the first and second rounds methyl-transfer occurs, and in all rounds of extension the ketoreductase and dehydratase are active. The enoyl reductase and C-MeT of clz2 are not active in the final round of extension. The acetyltransferase clz6 appears to have a broad substrate selectivity for its acyl CoA substrate, allowing the in vitro synthesis of novel squalestatins. The biosynthesis of SQS1 requires several oxidative steps likely performed by oxidoreductases clz3, clz15 and clz16. Finally, in support of the identification of the cluster as being responsible for SQS1 production, the cluster contains a gene encoding a putative squalene synthase (SS) clz20, suggesting a likely mechanism for self-resistance. The protein is Zaragozic acid A biosynthesis cluster protein 8 of Cochliobolus lunatus (Filamentous fungus).